A 371-amino-acid polypeptide reads, in one-letter code: Peptide chain release factor 2 (371 aa).

Residue Gln253 is modified to N5-methylglutamine.

This sequence belongs to the prokaryotic/mitochondrial release factor family. Post-translationally, methylated by PrmC. Methylation increases the termination efficiency of RF2.

The protein localises to the cytoplasm. Functionally, peptide chain release factor 2 directs the termination of translation in response to the peptide chain termination codons UGA and UAA. The sequence is that of Peptide chain release factor 2 from Mycobacterium ulcerans (strain Agy99).